A 213-amino-acid polypeptide reads, in one-letter code: Na(+)-translocating NADH-quinone reductase subunit D (213 aa).

7 helical membrane passes run 21–41, 42–62, 77–97, 101–121, 131–151, 153–173, and 183–203; these read PLIA…VNTA, LTMG…VSLL, IIIS…FFDI, LSVF…AESL, FLDG…VSII, EFFG…FYAS, and FGLM…IWGV.

This sequence belongs to the NqrDE/RnfAE family. In terms of assembly, composed of six subunits; NqrA, NqrB, NqrC, NqrD, NqrE and NqrF.

It is found in the cell inner membrane. The enzyme catalyses a ubiquinone + n Na(+)(in) + NADH + H(+) = a ubiquinol + n Na(+)(out) + NAD(+). NQR complex catalyzes the reduction of ubiquinone-1 to ubiquinol by two successive reactions, coupled with the transport of Na(+) ions from the cytoplasm to the periplasm. NqrA to NqrE are probably involved in the second step, the conversion of ubisemiquinone to ubiquinol. In Chlamydia abortus (strain DSM 27085 / S26/3) (Chlamydophila abortus), this protein is Na(+)-translocating NADH-quinone reductase subunit D.